The primary structure comprises 190 residues: Potassium-transporting ATPase KdpC subunit (190 aa).

The helical transmembrane segment at 13 to 33 (LLLILTLITGILYPIVTTGFA) threads the bilayer.

This sequence belongs to the KdpC family. As to quaternary structure, the system is composed of three essential subunits: KdpA, KdpB and KdpC.

It localises to the cell inner membrane. In terms of biological role, part of the high-affinity ATP-driven potassium transport (or Kdp) system, which catalyzes the hydrolysis of ATP coupled with the electrogenic transport of potassium into the cytoplasm. This subunit acts as a catalytic chaperone that increases the ATP-binding affinity of the ATP-hydrolyzing subunit KdpB by the formation of a transient KdpB/KdpC/ATP ternary complex. The chain is Potassium-transporting ATPase KdpC subunit from Leptospira interrogans serogroup Icterohaemorrhagiae serovar copenhageni (strain Fiocruz L1-130).